A 202-amino-acid polypeptide reads, in one-letter code: Urease accessory protein UreG (202 aa).

Residue 10-17 (GPVGSGKT) coordinates GTP.

The protein belongs to the SIMIBI class G3E GTPase family. UreG subfamily. Homodimer. UreD, UreF and UreG form a complex that acts as a GTP-hydrolysis-dependent molecular chaperone, activating the urease apoprotein by helping to assemble the nickel containing metallocenter of UreC. The UreE protein probably delivers the nickel.

The protein localises to the cytoplasm. Functionally, facilitates the functional incorporation of the urease nickel metallocenter. This process requires GTP hydrolysis, probably effectuated by UreG. The protein is Urease accessory protein UreG of Synechococcus sp. (strain JA-3-3Ab) (Cyanobacteria bacterium Yellowstone A-Prime).